Here is a 397-residue protein sequence, read N- to C-terminus: Chorismate synthase (397 aa).

NADP(+) contacts are provided by R40 and R46. Residues 129–131, 257–258, G302, 317–321, and R343 contribute to the FMN site; these read RSS, QA, and KPISS.

The protein belongs to the chorismate synthase family. Homotetramer. FMNH2 is required as a cofactor.

It carries out the reaction 5-O-(1-carboxyvinyl)-3-phosphoshikimate = chorismate + phosphate. It participates in metabolic intermediate biosynthesis; chorismate biosynthesis; chorismate from D-erythrose 4-phosphate and phosphoenolpyruvate: step 7/7. In terms of biological role, catalyzes the anti-1,4-elimination of the C-3 phosphate and the C-6 proR hydrogen from 5-enolpyruvylshikimate-3-phosphate (EPSP) to yield chorismate, which is the branch point compound that serves as the starting substrate for the three terminal pathways of aromatic amino acid biosynthesis. This reaction introduces a second double bond into the aromatic ring system. The polypeptide is Chorismate synthase (Chlorobium luteolum (strain DSM 273 / BCRC 81028 / 2530) (Pelodictyon luteolum)).